Reading from the N-terminus, the 264-residue chain is Thymidylate synthase (264 aa).

Residue R21 coordinates dUMP. H51 lines the (6R)-5,10-methylene-5,6,7,8-tetrahydrofolate pocket. 126–127 lines the dUMP pocket; it reads RR. The Nucleophile role is filled by C146. DUMP-binding positions include 166 to 169, N177, and 207 to 209; these read RSCD and HLY. D169 is a (6R)-5,10-methylene-5,6,7,8-tetrahydrofolate binding site. A263 contributes to the (6R)-5,10-methylene-5,6,7,8-tetrahydrofolate binding site.

The protein belongs to the thymidylate synthase family. Bacterial-type ThyA subfamily. Homodimer.

The protein resides in the cytoplasm. The enzyme catalyses dUMP + (6R)-5,10-methylene-5,6,7,8-tetrahydrofolate = 7,8-dihydrofolate + dTMP. It participates in pyrimidine metabolism; dTTP biosynthesis. Its function is as follows. Catalyzes the reductive methylation of 2'-deoxyuridine-5'-monophosphate (dUMP) to 2'-deoxythymidine-5'-monophosphate (dTMP) while utilizing 5,10-methylenetetrahydrofolate (mTHF) as the methyl donor and reductant in the reaction, yielding dihydrofolate (DHF) as a by-product. This enzymatic reaction provides an intracellular de novo source of dTMP, an essential precursor for DNA biosynthesis. This Aeromonas hydrophila subsp. hydrophila (strain ATCC 7966 / DSM 30187 / BCRC 13018 / CCUG 14551 / JCM 1027 / KCTC 2358 / NCIMB 9240 / NCTC 8049) protein is Thymidylate synthase.